The primary structure comprises 210 residues: MKNKLDLSLYLVASQGNKSEECFLNTLENAIKGGVSIIQLREKELNAREFYKLGLKVQKLCKAYKIPFLINDRVDIALALDADGVHLGQEDLEVKLARKLLGDEKIIGLSLKKLEQLEFIQGANYLGCGAIKATPTKESSLLSLELLSQICDKSPIGVVAIGGVDKAVLDELKGINLSGVAVVRAIMDAKDAFLAAKELKRKIYENLPLK.

Residues 39 to 43 and Asn71 each bind 4-amino-2-methyl-5-(diphosphooxymethyl)pyrimidine; that span reads QLREK. The Mg(2+) site is built by Asp72 and Asp91. Residue Ser110 participates in 4-amino-2-methyl-5-(diphosphooxymethyl)pyrimidine binding. Residue 134 to 136 participates in 2-[(2R,5Z)-2-carboxy-4-methylthiazol-5(2H)-ylidene]ethyl phosphate binding; it reads TPT. Lys137 is a binding site for 4-amino-2-methyl-5-(diphosphooxymethyl)pyrimidine. A 2-[(2R,5Z)-2-carboxy-4-methylthiazol-5(2H)-ylidene]ethyl phosphate-binding site is contributed by Gly163.

Belongs to the thiamine-phosphate synthase family. The cofactor is Mg(2+).

The enzyme catalyses 2-[(2R,5Z)-2-carboxy-4-methylthiazol-5(2H)-ylidene]ethyl phosphate + 4-amino-2-methyl-5-(diphosphooxymethyl)pyrimidine + 2 H(+) = thiamine phosphate + CO2 + diphosphate. The catalysed reaction is 2-(2-carboxy-4-methylthiazol-5-yl)ethyl phosphate + 4-amino-2-methyl-5-(diphosphooxymethyl)pyrimidine + 2 H(+) = thiamine phosphate + CO2 + diphosphate. It catalyses the reaction 4-methyl-5-(2-phosphooxyethyl)-thiazole + 4-amino-2-methyl-5-(diphosphooxymethyl)pyrimidine + H(+) = thiamine phosphate + diphosphate. The protein operates within cofactor biosynthesis; thiamine diphosphate biosynthesis; thiamine phosphate from 4-amino-2-methyl-5-diphosphomethylpyrimidine and 4-methyl-5-(2-phosphoethyl)-thiazole: step 1/1. Condenses 4-methyl-5-(beta-hydroxyethyl)thiazole monophosphate (THZ-P) and 2-methyl-4-amino-5-hydroxymethyl pyrimidine pyrophosphate (HMP-PP) to form thiamine monophosphate (TMP). The sequence is that of Thiamine-phosphate synthase from Campylobacter jejuni subsp. jejuni serotype O:6 (strain 81116 / NCTC 11828).